Here is a 686-residue protein sequence, read N- to C-terminus: Acyl-CoA synthetase short-chain family member 3, mitochondrial (686 aa).

The N-terminal 29 residues, 1–29, are a transit peptide targeting the mitochondrion; that stretch reads MKPSWLQCRKVTSAGGLGGPLPGSSPARG. 227–230 lines the CoA pocket; the sequence is EPGR. ATP is bound by residues 425 to 427 and 446 to 451; these read GER and DHWWQT. Position 518 is an N6-succinyllysine (Lys-518). Position 524 is an N6-acetyllysine (Lys-524). Residues Asp-539, Arg-554, and Arg-565 each coordinate ATP. Arg-624 contributes to the CoA binding site.

The protein belongs to the ATP-dependent AMP-binding enzyme family.

It is found in the mitochondrion matrix. The catalysed reaction is acetate + ATP + CoA = acetyl-CoA + AMP + diphosphate. It carries out the reaction propanoate + ATP + CoA = propanoyl-CoA + AMP + diphosphate. The enzyme catalyses butanoate + ATP + CoA = butanoyl-CoA + AMP + diphosphate. Catalyzes the synthesis of acetyl-CoA from short-chain fatty acids. Propionate is the preferred substrate. Can utilize acetate and butyrate with a much lower affinity. The protein is Acyl-CoA synthetase short-chain family member 3, mitochondrial (ACSS3) of Homo sapiens (Human).